We begin with the raw amino-acid sequence, 234 residues long: Sugar fermentation stimulation protein homolog (234 aa).

The protein belongs to the SfsA family.

The sequence is that of Sugar fermentation stimulation protein homolog from Edwardsiella ictaluri (strain 93-146).